The following is a 221-amino-acid chain: uncharacterized protein (221 aa).

Composition is skewed to low complexity over residues 1-27 and 140-162; these read MNNNNNNNNNNNNNNNNNNNNNNNNNN and TTTSSTTTTTTTTSTTTTNNSSS. Disordered regions lie at residues 1-28 and 140-205; these read MNNNNNNNNNNNNNNNNNNNNNNNNNNE and TTTS…NIGG.

This is an uncharacterized protein from Dictyostelium discoideum (Social amoeba).